Consider the following 302-residue polypeptide: Probable alpha-L-glutamate ligase (302 aa).

The ATP-grasp domain occupies 104 to 287 (MQLLSRKGIG…IAGMVFEFLE (184 aa)). Residues Lys-141, 178–179 (EF), Asp-187, and 211–213 (RSN) contribute to the ATP site. Mg(2+) is bound by residues Asp-248, Glu-260, and Asn-262. Mn(2+) is bound by residues Asp-248, Glu-260, and Asn-262.

This sequence belongs to the RimK family. Mg(2+) is required as a cofactor. Requires Mn(2+) as cofactor.

In Psychromonas ingrahamii (strain DSM 17664 / CCUG 51855 / 37), this protein is Probable alpha-L-glutamate ligase.